We begin with the raw amino-acid sequence, 462 residues long: ATP synthase subunit beta (462 aa).

152-159 provides a ligand contact to ATP; the sequence is GGAGVGKT.

This sequence belongs to the ATPase alpha/beta chains family. F-type ATPases have 2 components, CF(1) - the catalytic core - and CF(0) - the membrane proton channel. CF(1) has five subunits: alpha(3), beta(3), gamma(1), delta(1), epsilon(1). CF(0) has three main subunits: a(1), b(2) and c(9-12). The alpha and beta chains form an alternating ring which encloses part of the gamma chain. CF(1) is attached to CF(0) by a central stalk formed by the gamma and epsilon chains, while a peripheral stalk is formed by the delta and b chains.

It is found in the cell inner membrane. The catalysed reaction is ATP + H2O + 4 H(+)(in) = ADP + phosphate + 5 H(+)(out). Functionally, produces ATP from ADP in the presence of a proton gradient across the membrane. The catalytic sites are hosted primarily by the beta subunits. In Shewanella amazonensis (strain ATCC BAA-1098 / SB2B), this protein is ATP synthase subunit beta.